The following is a 397-amino-acid chain: MSESVHTNTSLWSKGMKAVIVAQFLSAFGDNALLFATLALLKAQFYPEWSQPILQMVFVGAYILFAPFVGQVADSFAKGRVMMFANGLKLLGAASICFGINPFLGYTLVGVGAAAYSPAKYGILGELTTGSKLVKANGLMEASTIAAILLGSVAGGVLADWHVLVALAACALAYGGAVVANIYIPKLAAARPGQSWNLINMTRSFLNACTSLWRNGETRFSLVGTSLFWGAGVTLRFLLVLWVPVALGITDNATPTYLNAMVAIGIVVGAGAAAKLVTLETVSRCMPAGILIGVVVLIFSLQHELLPAYALLMLIGVLGGFFVVPLNALLQERGKKSVGAGNAIAVQNLGENSAMLLMLGIYSLAVMVGIPVVPIGIGFGALFALAITALWIWQRRY.

Over 1 to 17 the chain is Periplasmic; the sequence is MSESVHTNTSLWSKGMK. Residues 18-38 traverse the membrane as a helical segment; sequence AVIVAQFLSAFGDNALLFATL. At 39-52 the chain is on the cytoplasmic side; the sequence is ALLKAQFYPEWSQP. Residues 53–73 traverse the membrane as a helical segment; it reads ILQMVFVGAYILFAPFVGQVA. Topologically, residues 74 to 90 are periplasmic; the sequence is DSFAKGRVMMFANGLKL. A helical transmembrane segment spans residues 91–111; it reads LGAASICFGINPFLGYTLVGV. Residues 112–144 lie on the Cytoplasmic side of the membrane; sequence GAAAYSPAKYGILGELTTGSKLVKANGLMEAST. A helical membrane pass occupies residues 145-165; it reads IAAILLGSVAGGVLADWHVLV. Alanine 166 is a topological domain (periplasmic). Residues 167-187 traverse the membrane as a helical segment; it reads LAACALAYGGAVVANIYIPKL. The Cytoplasmic portion of the chain corresponds to 188–226; the sequence is AAARPGQSWNLINMTRSFLNACTSLWRNGETRFSLVGTS. The helical transmembrane segment at 227-247 threads the bilayer; the sequence is LFWGAGVTLRFLLVLWVPVAL. Residues 248 to 256 lie on the Periplasmic side of the membrane; sequence GITDNATPT. A helical membrane pass occupies residues 257–277; sequence YLNAMVAIGIVVGAGAAAKLV. The Cytoplasmic segment spans residues 278 to 280; sequence TLE. A helical membrane pass occupies residues 281–301; sequence TVSRCMPAGILIGVVVLIFSL. At 302-304 the chain is on the periplasmic side; it reads QHE. A helical membrane pass occupies residues 305 to 325; it reads LLPAYALLMLIGVLGGFFVVP. The Cytoplasmic segment spans residues 326 to 343; it reads LNALLQERGKKSVGAGNA. The chain crosses the membrane as a helical span at residues 344-364; that stretch reads IAVQNLGENSAMLLMLGIYSL. Residues 365-366 are Periplasmic-facing; the sequence is AV. A helical membrane pass occupies residues 367 to 387; that stretch reads MVGIPVVPIGIGFGALFALAI. The Cytoplasmic segment spans residues 388-397; it reads TALWIWQRRY.

The protein belongs to the major facilitator superfamily. LplT (TC 2.A.1.42) family.

The protein localises to the cell inner membrane. In terms of biological role, catalyzes the facilitated diffusion of 2-acyl-glycero-3-phosphoethanolamine (2-acyl-GPE) into the cell. The chain is Lysophospholipid transporter LplT from Escherichia coli O127:H6 (strain E2348/69 / EPEC).